Reading from the N-terminus, the 113-residue chain is Ribonuclease P protein component (113 aa).

It belongs to the RnpA family. Consists of a catalytic RNA component (M1 or rnpB) and a protein subunit.

It catalyses the reaction Endonucleolytic cleavage of RNA, removing 5'-extranucleotides from tRNA precursor.. Functionally, RNaseP catalyzes the removal of the 5'-leader sequence from pre-tRNA to produce the mature 5'-terminus. It can also cleave other RNA substrates such as 4.5S RNA. The protein component plays an auxiliary but essential role in vivo by binding to the 5'-leader sequence and broadening the substrate specificity of the ribozyme. The polypeptide is Ribonuclease P protein component (Clostridium novyi (strain NT)).